A 662-amino-acid polypeptide reads, in one-letter code: uncharacterized protein (662 aa).

16 helical membrane-spanning segments follow: residues 10 to 30 (SSIV…GWPV), 46 to 66 (PVIG…FLPI), 68 to 88 (AINL…LSKG), 101 to 121 (GFCW…EIIP), 167 to 187 (LIYY…TGAT), 193 to 213 (IALT…LAVA), 217 to 237 (SAYA…KPAV), 263 to 283 (PWVP…MAYL), 285 to 305 (ILYS…AILA), 312 to 332 (MWAG…LSVS), 342 to 362 (EVLI…AVLI), 373 to 393 (KVVE…LDIP), 394 to 414 (GFWL…FLIW), 432 to 452 (ALTV…SVIM), 460 to 480 (VLIP…STTI), and 485 to 505 (LVGR…ILVG).

It localises to the cell membrane. This is an uncharacterized protein from Sinorhizobium fredii (strain NBRC 101917 / NGR234).